The primary structure comprises 637 residues: ATP-dependent zinc metalloprotease FtsH (637 aa).

At 1-7 (MNRVFRN) the chain is on the cytoplasmic side. The helical transmembrane segment at 8–28 (TIFYLLILLVVIGVVSYFQTS) threads the bilayer. The Extracellular segment spans residues 29–109 (NPKTENMSYS…VEPAQETSGW (81 aa)). The chain crosses the membrane as a helical span at residues 110 to 130 (VTFLTTIIPFVIIFILFFFLL). Over 131–637 (NQAQGGGSRV…TEEKKDDTKE (507 aa)) the chain is Cytoplasmic. Residue 201–208 (GPPGTGKT) coordinates ATP. His-423 is a binding site for Zn(2+). Glu-424 is an active-site residue. 2 residues coordinate Zn(2+): His-427 and Asp-499. A not necessary for FtsH function region spans residues 514–637 (FGMSEKLGPL…TEEKKDDTKE (124 aa)).

The protein in the central section; belongs to the AAA ATPase family. This sequence in the C-terminal section; belongs to the peptidase M41 family. In terms of assembly, homohexamer. Interacts with FloT at midcell. Interacts with FloA at midcell. Another study shows only minor colocalization with FloA or FloT. Zn(2+) is required as a cofactor.

Its subcellular location is the cell membrane. The protein localises to the membrane raft. Acts as a processive, ATP-dependent zinc metallopeptidase for both cytoplasmic and membrane proteins. Plays a role in the quality control of integral membrane proteins. In terms of biological role, in vitro partially degrades Spo0E, the phosphatase that acts on Spo0A-P. Recognition requires the last 14 residues of Spo0E. Its stabile accumulation requires FlotA and Flot. May degrade EzrA. The polypeptide is ATP-dependent zinc metalloprotease FtsH (Bacillus subtilis (strain 168)).